The sequence spans 21 residues: MAIIIGLEFAQLPMSFGAKYE.

The chain is Protein YadW from Escherichia coli (strain K12).